Consider the following 533-residue polypeptide: Purine-cytosine permease FCY2 (533 aa).

At 1–98 the chain is on the cytoplasmic side; sequence MLEEGNNVYE…NAASMWFSAN (98 aa). A Glycyl lysine isopeptide (Lys-Gly) (interchain with G-Cter in ubiquitin) cross-link involves residue K16. The residue at position 18 (S18) is a Phosphoserine. The chain crosses the membrane as a helical span at residues 99-119; sequence MVIASYALGALGPMVFGLNFG. Residues 120 to 121 lie on the Extracellular side of the membrane; it reads QS. Residues 122–141 form a helical membrane-spanning segment; sequence VLVIIFFNIMGLIFVAFFSV. The Cytoplasmic segment spans residues 142 to 198; that stretch reads FGAELGLRQMILSRYLVGNVTARIFSLINVIACVGWGIVNTSVSAQLLNMVNEGSGH. Residues 165–184 form a surface seeking region; sequence IFSLINVIACVGWGIVNTSV. The helical transmembrane segment at 199 to 218 threads the bilayer; the sequence is VCPIWAGCLIIIGGTVLVTF. The Extracellular segment spans residues 219-256; the sequence is FGYSVIHAYEKWSWVPNFAVFLVIIAQLSRSGKFKGGE. Residues 257–276 form a helical membrane-spanning segment; that stretch reads WVGGATTAGSVLSFGSSIFG. The Cytoplasmic segment spans residues 277–300; the sequence is FAAGWTTYAADYTVYMPKSTNKYK. The helical transmembrane segment at 301–320 threads the bilayer; it reads IFFSLVAGLAFPLFFTMILG. The Extracellular segment spans residues 321 to 347; the sequence is AASAMAALNDPTWKAYYDKNAMGGVIY. The chain crosses the membrane as a helical span at residues 348–367; that stretch reads AILVPNSLNGFGQFCCVLLA. At 368–398 the chain is on the cytoplasmic side; that stretch reads LSTIANNIPNMYTVALSAQALWAPLAKIPRV. A helical transmembrane segment spans residues 399–418; sequence VWTMAGNAATLGISIPATYY. Topologically, residues 419–465 are extracellular; sequence FDGFMENFMDSIGYYLAIYIAISCSEHFFYRRSFSAYNIDDWDNWEH. The helical transmembrane segment at 466-485 threads the bilayer; it reads LPIGIAGTAALIVGAFGVAL. The Cytoplasmic segment spans residues 486–533; it reads GMCQTYWVGEIGRLIGKYGGDIGFELGASWAFIIYNILRPLELKYFGR.

The protein belongs to the purine-cytosine permease (2.A.39) family. Not N-glycosylated.

Its subcellular location is the membrane. In terms of biological role, this permease has a broad specificity towards purines, and also transport cytosine and 5-methylcytosine but neither uracil nor thymine. This Saccharomyces cerevisiae (strain ATCC 204508 / S288c) (Baker's yeast) protein is Purine-cytosine permease FCY2 (FCY2).